The primary structure comprises 268 residues: Secreted RxLR effector protein 5 (268 aa).

The signal sequence occupies residues 1–21 (MRGAFYMAITLFLARSRSATA). The RxLR-dEER motif lies at 48–63 (RYLRDGLALSAANEER). N-linked (GlcNAc...) asparagine glycosylation occurs at asparagine 104.

It belongs to the RxLR effector family.

The protein localises to the secreted. It localises to the host nucleus. Functionally, effector that acts as a broad suppressor of cell death to interrupt plant immunity. Inhibits cell death induced by cell death-inducing proteins, including the PAMP elicitor INF1 from P.infestans. This Plasmopara viticola (Downy mildew of grapevine) protein is Secreted RxLR effector protein 5.